The chain runs to 241 residues: MKIVTVNDYDEMSKFAAKIIASQIILKENSVLGLATGGTPLGMYKELINLYNKENLNFSKVQTFNLDEYYGVSDDNPQSYHYYMKNNFFKFTNIKNENINILDGTTSDIENECKSYDNKILSSGGIDIQVLGIGENGHIGFNEPDINFEAKTHLVKLDEKTIEANSRFFNSKNEVPTSALSMGIKTIMQSKKILLLANGEKKAEAIFKMVNGKISPEVPASILQLHNDTTIIIDKAAAKML.

Asp-67 functions as the Proton acceptor; for enolization step in the catalytic mechanism. Catalysis depends on Asn-136, which acts as the For ring-opening step. The active-site Proton acceptor; for ring-opening step is His-138. Glu-143 functions as the For ring-opening step in the catalytic mechanism.

The protein belongs to the glucosamine/galactosamine-6-phosphate isomerase family. NagB subfamily.

The catalysed reaction is alpha-D-glucosamine 6-phosphate + H2O = beta-D-fructose 6-phosphate + NH4(+). It functions in the pathway amino-sugar metabolism; N-acetylneuraminate degradation; D-fructose 6-phosphate from N-acetylneuraminate: step 5/5. Functionally, catalyzes the reversible isomerization-deamination of glucosamine 6-phosphate (GlcN6P) to form fructose 6-phosphate (Fru6P) and ammonium ion. In Clostridium acetobutylicum (strain ATCC 824 / DSM 792 / JCM 1419 / IAM 19013 / LMG 5710 / NBRC 13948 / NRRL B-527 / VKM B-1787 / 2291 / W), this protein is Glucosamine-6-phosphate deaminase.